A 179-amino-acid polypeptide reads, in one-letter code: Protein GrpE (179 aa).

A disordered region spans residues methionine 1–arginine 22. Over residues glutamate 11 to arginine 22 the composition is skewed to basic and acidic residues.

This sequence belongs to the GrpE family. Homodimer.

The protein localises to the cytoplasm. Its function is as follows. Participates actively in the response to hyperosmotic and heat shock by preventing the aggregation of stress-denatured proteins, in association with DnaK and GrpE. It is the nucleotide exchange factor for DnaK and may function as a thermosensor. Unfolded proteins bind initially to DnaJ; upon interaction with the DnaJ-bound protein, DnaK hydrolyzes its bound ATP, resulting in the formation of a stable complex. GrpE releases ADP from DnaK; ATP binding to DnaK triggers the release of the substrate protein, thus completing the reaction cycle. Several rounds of ATP-dependent interactions between DnaJ, DnaK and GrpE are required for fully efficient folding. This chain is Protein GrpE, found in Rickettsia canadensis (strain McKiel).